We begin with the raw amino-acid sequence, 105 residues long: Small ribosomal subunit protein uS10 (105 aa).

The protein belongs to the universal ribosomal protein uS10 family. Part of the 30S ribosomal subunit.

In terms of biological role, involved in the binding of tRNA to the ribosomes. The sequence is that of Small ribosomal subunit protein uS10 from Lachnoclostridium phytofermentans (strain ATCC 700394 / DSM 18823 / ISDg) (Clostridium phytofermentans).